Reading from the N-terminus, the 103-residue chain is uncharacterized protein (103 aa).

Residues 37–57 (FILLSSLLIGGLLITIACYHI) traverse the membrane as a helical segment.

The protein resides in the membrane. This is an uncharacterized protein from Saccharomyces cerevisiae (strain ATCC 204508 / S288c) (Baker's yeast).